The following is a 304-amino-acid chain: GDP-6-deoxy-D-mannose reductase (304 aa).

Residues 13–14 (FV) and 39–40 (DL) contribute to the NADP(+) site. 105–106 (SG) lines the substrate pocket. Tyrosine 131 provides a ligand contact to NADP(+). Substrate contacts are provided by residues asparagine 160, arginine 200, and 260 to 263 (RRAE).

The protein belongs to the NAD(P)-dependent epimerase/dehydratase family. GDP-6-deoxy-D-mannose reductase subfamily.

It catalyses the reaction GDP-alpha-D-rhamnose + NAD(+) = GDP-4-dehydro-alpha-D-rhamnose + NADH + H(+). It carries out the reaction GDP-alpha-D-rhamnose + NADP(+) = GDP-4-dehydro-alpha-D-rhamnose + NADPH + H(+). Its function is as follows. Reductase that catalyzes the conversion of GDP-6-deoxy-D-mannose to GDP-4-dehydro-6-deoxy-D-mannose (GDP-D-rhamnose). The protein is GDP-6-deoxy-D-mannose reductase (rmd) of Pseudomonas aeruginosa (strain ATCC 15692 / DSM 22644 / CIP 104116 / JCM 14847 / LMG 12228 / 1C / PRS 101 / PAO1).